The primary structure comprises 643 residues: MSISSKTEDSDIRSSVMTDHGPSGMKRLAGLSLAALGVVFGDIGTSPLYAVRECFHGEYGITASAGNVLGVLSLLFWALVLIVGLKYLTFIMRADNDGEGGILALTALIITHSRNRGYERWLLVAIGLFGASLLYGDGMITPAISVLSAIEGLQIIAPAFHEMVIPLTMLVLAGLFLFQHNGTARVGALFGPIILLWFIAIAILGIIEIVKYPQVLQAMLPWHGISFLLGNNLKGFTVLGAVFLSVTGAEALYADMGHFGRRPIRITWFLLVLPALLLNYFGQGALLLSSPGEAHHPFYGLVPSWAMIPMVLLATSATIIASQALITGVFSLTQQAIQLGYLPRLTVTHTSARHMGQIYVPAANWSLMVGTIGIVAWFGSSSKLAAAYGVAVTATMLISTILFYYIARDLWKWNPAALNVMITFFAAIDLSFFGASMSKLFHGAWVPLAVALVMFTIMNTWKQGRKLLMRQLQDRTLTVDEFIRSLALQQPQRVPGQVVYLTANPDVVPIALLHNLRHNKVLHSEVALFHFSNERVPRVPNSRKIEVDRLGDGFTRVIARYGFLEYPNISQVLALANQQGLNFKPEGISFFLSREKIVAGEKTKMFPSRKKLFALMARNALSATAYYDLPSGQVIEIGVQVQI.

Positions 1 to 12 (MSISSKTEDSDI) are enriched in basic and acidic residues. The tract at residues 1–20 (MSISSKTEDSDIRSSVMTDH) is disordered. Helical transmembrane passes span 28-48 (LAGL…TSPL), 65-85 (AGNV…IVGL), 121-141 (WLLV…GMIT), 158-178 (PAFH…LFLF), 187-207 (GALF…LGII), 224-244 (GISF…AVFL), 268-288 (WFLL…ALLL), 301-321 (LVPS…TIIA), 358-378 (IYVP…VAWF), 384-404 (LAAA…ILFY), 415-435 (PAAL…FFGA), and 440-460 (LFHG…IMNT).

The protein belongs to the HAK/KUP transporter (TC 2.A.72) family.

Its subcellular location is the cell inner membrane. The catalysed reaction is K(+)(in) + H(+)(in) = K(+)(out) + H(+)(out). Its function is as follows. Transport of potassium into the cell. Likely operates as a K(+):H(+) symporter. The polypeptide is Probable potassium transport system protein Kup (Chlorobium luteolum (strain DSM 273 / BCRC 81028 / 2530) (Pelodictyon luteolum)).